A 261-amino-acid polypeptide reads, in one-letter code: Gap junction beta-6 protein (261 aa).

The Cytoplasmic segment spans residues 1–22; it reads MDWGTLHTFIGGVNKHSTSIGK. The helical transmembrane segment at 23–45 threads the bilayer; that stretch reads VWITVIFIFRVMILVVAAQEVWG. Over 46–75 the chain is Extracellular; sequence DEQEDFVCNTLQPGCKNVCYDHFFPVSHIR. Residues 76 to 98 form a helical membrane-spanning segment; the sequence is LWALQLIFVSTPALLVAMHVAYY. Residues 99–131 are Cytoplasmic-facing; that stretch reads RHETTRKFRRGEKRNDFKDIEDIKKQKVRIEGS. A helical transmembrane segment spans residues 132-154; sequence LWWTYTSSIFFRIIFEAAFMYVF. Residues 155 to 192 are Extracellular-facing; it reads YFLYNGYHLPWVLKCGIDPCPNLVDCFISRPTEKTVFT. The helical transmembrane segment at 193 to 215 threads the bilayer; it reads IFMISASVICMLLNVAELCYLLL. Topologically, residues 216–261 are cytoplasmic; it reads KVCFRRSKRAQTQKNHPNHALKESKQNEMNELISDSGQNAITGFPS.

The protein belongs to the connexin family. Beta-type (group I) subfamily. As to quaternary structure, a connexon is composed of a hexamer of connexins. Interacts with CNST.

The protein localises to the cell membrane. The protein resides in the cell junction. It localises to the gap junction. In terms of biological role, one gap junction consists of a cluster of closely packed pairs of transmembrane channels, the connexons, through which materials of low MW diffuse from one cell to a neighboring cell. The sequence is that of Gap junction beta-6 protein (GJB6) from Homo sapiens (Human).